A 437-amino-acid polypeptide reads, in one-letter code: Sodium/bile acid cotransporter 4 (437 aa).

The Extracellular segment spans residues 1–103; the sequence is MDGLDNTTRL…PPFWDTPLNH (103 aa). N-linked (GlcNAc...) asparagine glycosylation is found at Asn-6, Asn-20, and Asn-26. Residues 16–84 form a disordered region; that stretch reads LLPDNLTLSP…GGVAGQDSST (69 aa). The span at 21–50 shows a compositional bias: low complexity; that stretch reads LTLSPNASSTSASTLSPLPVTSSPSPGLSL. Residues 104-124 traverse the membrane as a helical segment; the sequence is GLNVFVGAALCITMLGLGCTV. Over 125–140 the chain is Cytoplasmic; that stretch reads DVNHFGAHVRRPVGAL. The chain crosses the membrane as a helical span at residues 141–161; the sequence is LAALCQFGFLPLLAFLLALAF. At 162–197 the chain is on the extracellular side; sequence KLDEVAAVAVLLCGCCPGGNLSNLMSLLVDGDMNLS. Residues Asn-181 and Asn-195 are each glycosylated (N-linked (GlcNAc...) asparagine). The helical transmembrane segment at 198–218 threads the bilayer; that stretch reads IIMTISSTLLALVLMPLCLWI. At 219 to 233 the chain is on the cytoplasmic side; the sequence is YSRAWINTPLVQLLP. Residues 234–254 form a helical membrane-spanning segment; that stretch reads LGAVTLTLCSTLIPIGLGVFI. Residues 255–267 are Extracellular-facing; that stretch reads RYKYNRVADYIVK. Residues 268–288 form a helical membrane-spanning segment; it reads VSLCSLLVTLVVLFIMTGTML. Residues 289-291 are Cytoplasmic-facing; it reads GPE. Residues 292 to 312 traverse the membrane as a helical segment; it reads LLASIPAAVYVVAIFMPLAGY. The Extracellular segment spans residues 313–360; sequence ASGYGLATLFHLPPNCKRTVCLETGSQNVQLCTAILKLAFPPRFIGSM. A helical membrane pass occupies residues 361-381; that stretch reads YMFPLLYALFQSAEAGVFVLI. The Cytoplasmic portion of the chain corresponds to 382 to 437; that stretch reads YKMYGSEILHKREALDEDDDTDISYKKLKEEELADTSYGTVGTDDLVLMETTQTSL.

It belongs to the bile acid:sodium symporter (BASS) (TC 2.A.28) family. Activated following N-terminal proteolytic cleavage by thrombin and/or proteases. In terms of tissue distribution, mainly expressed in the central nervous system cholinergic neurons. Expressed (at protein level) in motor regions of the spinal cord and rhombencephalon, in mesopontine cholinergic neurons, the medial habenula, cholinergic areas of the forebrain, and the gut myenteric plexus.

The protein localises to the cell membrane. Transporter for bile acids. The polypeptide is Sodium/bile acid cotransporter 4 (Slc10a4) (Rattus norvegicus (Rat)).